The following is a 346-amino-acid chain: Methylthioribose-1-phosphate isomerase (346 aa).

Substrate contacts are provided by residues 46 to 48, Arg-89, and Gln-196; that span reads RGA. Asp-237 serves as the catalytic Proton donor. 247-248 is a substrate binding site; it reads NK.

This sequence belongs to the eIF-2B alpha/beta/delta subunits family. MtnA subfamily.

The catalysed reaction is 5-(methylsulfanyl)-alpha-D-ribose 1-phosphate = 5-(methylsulfanyl)-D-ribulose 1-phosphate. It participates in amino-acid biosynthesis; L-methionine biosynthesis via salvage pathway; L-methionine from S-methyl-5-thio-alpha-D-ribose 1-phosphate: step 1/6. Functionally, catalyzes the interconversion of methylthioribose-1-phosphate (MTR-1-P) into methylthioribulose-1-phosphate (MTRu-1-P). The chain is Methylthioribose-1-phosphate isomerase from Geobacter sp. (strain M21).